Reading from the N-terminus, the 253-residue chain is MLMKQKGIIIKSVDYGESDKIITILNEYGAKIPLMARRAKKVKSGLQANTQLFVYGLFIYNKWRGMGTLNSVDVINQHYELQLDLFESSYASLCAETIDRSMEENEVSKYNYDLLQFVLSKINEGTPAQLMSVIVLLKNMSKFGFTASFDHCAITGIQDQSKLIAYSFKFDGAISESALYQDQHAFHLSNRTLYLLNILQQLPISKMNHLNIQQDILNEMSELLIMLYREYAGMFFKSQKLINQLNRLEKDSL.

It belongs to the RecO family.

In terms of biological role, involved in DNA repair and RecF pathway recombination. This is DNA repair protein RecO from Staphylococcus epidermidis (strain ATCC 35984 / DSM 28319 / BCRC 17069 / CCUG 31568 / BM 3577 / RP62A).